The following is a 387-amino-acid chain: Polyphosphate kinase (387 aa).

Mg(2+)-binding residues include R347 and R377.

The protein belongs to the polyphosphate kinase 1 (PPK1) family. It depends on Mg(2+) as a cofactor. An intermediate of this reaction is the autophosphorylated ppk in which a phosphate is covalently linked to a histidine residue through a N-P bond.

The catalysed reaction is [phosphate](n) + ATP = [phosphate](n+1) + ADP. Functionally, catalyzes the reversible transfer of the terminal phosphate of ATP to form a long-chain polyphosphate (polyP). The chain is Polyphosphate kinase (ppk) from Aphanizomenon baltica.